We begin with the raw amino-acid sequence, 360 residues long: Alpha-2-HS-glycoprotein (360 aa).

An N-terminal signal peptide occupies residues 1–15 (LVLLLSLAQLWSCHL). The region spanning 24 to 130 (YREHNCDDPE…QFTVLSAKCD (107 aa)) is the Cystatin fetuin-A-type 1 domain. Cystine bridges form between Cys29/Cys351, Cys86/Cys97, Cys111/Cys129, Cys143/Cys146, Cys205/Cys216, and Cys227/Cys244. Asn96 carries N-linked (GlcNAc...) asparagine glycosylation. Ser131 carries the post-translational modification Phosphoserine. Thr132 bears the Phosphothreonine mark. A Phosphoserine modification is found at Ser135. Residues 141-252 (KLCPDCPLLT…TCTIFPAQPV (112 aa)) form the Cystatin fetuin-A-type 2 domain. Residue Asn153 is glycosylated (N-linked (GlcNAc...) asparagine). Residues 260–285 (VAGAAAVEPAPAVDPASPVSPPDGQS) form a disordered region. Thr312 is subject to Phosphothreonine. Phosphoserine is present on residues Ser318, Ser321, and Ser323.

This sequence belongs to the fetuin family. In terms of processing, phosphorylated by FAM20C in the extracellular medium. In terms of tissue distribution, bone marrow.

It is found in the secreted. In terms of biological role, a cell adhesion protein that binds immature cells of the granulocyte lineage. The protein is Alpha-2-HS-glycoprotein (AHSG) of Oryctolagus cuniculus (Rabbit).